The sequence spans 541 residues: Chaperonin GroEL (541 aa).

Residues 29-32 (TAGP), Lys50, 86-90 (DGTTT), Gly416, and Asp498 contribute to the ATP site.

This sequence belongs to the chaperonin (HSP60) family. As to quaternary structure, forms a cylinder of 14 subunits composed of two heptameric rings stacked back-to-back. Interacts with the co-chaperonin GroES.

Its subcellular location is the cytoplasm. It carries out the reaction ATP + H2O + a folded polypeptide = ADP + phosphate + an unfolded polypeptide.. Its function is as follows. Together with its co-chaperonin GroES, plays an essential role in assisting protein folding. The GroEL-GroES system forms a nano-cage that allows encapsulation of the non-native substrate proteins and provides a physical environment optimized to promote and accelerate protein folding. This chain is Chaperonin GroEL, found in Anaplasma phagocytophilum (Ehrlichia phagocytophila).